The following is a 144-amino-acid chain: Superoxide dismutase [Mn], mitochondrial (144 aa).

Mn(2+)-binding residues include His10, His58, and Asp143.

This sequence belongs to the iron/manganese superoxide dismutase family. In terms of assembly, homotetramer. Requires Mn(2+) as cofactor.

It is found in the mitochondrion matrix. The catalysed reaction is 2 superoxide + 2 H(+) = H2O2 + O2. Its function is as follows. Destroys superoxide anion radicals which are normally produced within the cells and which are toxic to biological systems. The chain is Superoxide dismutase [Mn], mitochondrial from Eptatretus stoutii (Pacific hagfish).